Reading from the N-terminus, the 82-residue chain is Small ribosomal subunit protein eS21z (82 aa).

The residue at position 1 (M1) is an N-acetylmethionine.

The protein belongs to the eukaryotic ribosomal protein eS21 family.

The protein is Small ribosomal subunit protein eS21z (RPS21B) of Arabidopsis thaliana (Mouse-ear cress).